The chain runs to 154 residues: Homeobox protein engrailed (154 aa).

The homeobox DNA-binding region spans 37–96 (EKRPRTAFSASQLQRLKQEFQQSNYLTEQRRRSLAKELTLSESQIKIWFQNKRAKIKKAS). The interval 127-154 (KLLNGQNTSGDCSRSDYTSDSDGDSLTH) is disordered. Positions 129 to 144 (LNGQNTSGDCSRSDYT) are enriched in polar residues. The span at 145-154 (SDSDGDSLTH) shows a compositional bias: acidic residues.

The protein belongs to the engrailed homeobox family.

It is found in the nucleus. The polypeptide is Homeobox protein engrailed (EN) (Tripneustes gratilla (Hawaian sea urchin)).